The chain runs to 317 residues: Sperm acrosome membrane-associated protein 6 (317 aa).

The N-terminal stretch at 1-18 (MFVFIAKLLIFSSVITSA) is a signal peptide. At 19–281 (FTCYQCFIDE…PSFSFWLPRP (263 aa)) the chain is on the extracellular side. Disulfide bonds link Cys-21-Cys-143, Cys-24-Cys-146, Cys-35-Cys-51, Cys-128-Cys-151, and Cys-132-Cys-157. N-linked (GlcNAc...) asparagine glycosylation occurs at Asn-29. In terms of domain architecture, Ig-like spans 123–237 (PRVSGCLPPC…EVLSQEQSLV (115 aa)). Asn-168 carries N-linked (GlcNAc...) asparagine glycosylation. Cys-174 and Cys-227 form a disulfide bridge. Residues 282–302 (ALLITCLTATMLLIFLSLGAM) form a helical membrane-spanning segment. Residues 303–317 (CRLWYQIRTNVSNPA) are Cytoplasmic-facing.

This sequence belongs to the SPACA6 family. As to quaternary structure, forms a complex with izumo1 and tmem81 on spermatocyte cell membrane. The complex binds to oocyte protein bncr. As to expression, expressed in testis.

The protein localises to the cytoplasmic vesicle. Its subcellular location is the secretory vesicle. The protein resides in the acrosome membrane. Sperm protein required for fusion of sperm with the egg membrane during fertilization. May regulate the expression of sperm surface protein DCST2. This is Sperm acrosome membrane-associated protein 6 from Danio rerio (Zebrafish).